The primary structure comprises 424 residues: Subtilisin-like protease 2 (424 aa).

The first 17 residues, 1 to 17 (MQLLNLGLLLLLPFVAG), serve as a signal peptide directing secretion. The propeptide occupies 18–123 (EIAPQPEPLR…VHPDQHVYLA (106 aa)). Positions 37–123 (QYIVTLKEGL…VHPDQHVYLA (87 aa)) constitute an Inhibitor I9 domain. The 293-residue stretch at 132 to 424 (RWGLGYMSSK…RKFTLPKNTK (293 aa)) folds into the Peptidase S8 domain. Active-site charge relay system residues include Asp-170 and His-202. N-linked (GlcNAc...) asparagine glycosylation is found at Asn-249, Asn-262, and Asn-350. Ser-359 acts as the Charge relay system in catalysis. A glycan (N-linked (GlcNAc...) asparagine) is linked at Asn-390.

It belongs to the peptidase S8 family.

It is found in the secreted. Secreted subtilisin-like serine protease with keratinolytic activity that contributes to pathogenicity. This chain is Subtilisin-like protease 2 (SUB2), found in Arthroderma otae (Microsporum canis).